The following is a 164-amino-acid chain: Histone H1 (164 aa).

Positions 1-10 (MAPRSSTSKS) are enriched in polar residues. The disordered stretch occupies residues 1-164 (MAPRSSTSKS…KKSSKPAKKN (164 aa)). Residues 16 to 27 (KDHKKAPIKKAI) show a composition bias toward basic residues. A phosphothreonine mark is found at Thr47 and Thr54. Composition is skewed to basic and acidic residues over residues 49–61 (VKKDVTPVKADTK), 69–89 (TMKETVSDAKKTVHAAAGDKK), and 117–156 (TKKEVKKDNKTAKKETKKDHKPAKKEAKKETKPAKKDAKK).

Cell-growth/division-associated phosphorylation by a CDC2-like kinase.

The protein localises to the nucleus. Its subcellular location is the chromosome. Its function is as follows. Histones H1 are necessary for the condensation of nucleosome chains into higher-order structures. The chain is Histone H1 (HHO) from Tetrahymena thermophila (strain SB210).